A 179-amino-acid chain; its full sequence is Large ribosomal subunit protein uL5 (179 aa).

Belongs to the universal ribosomal protein uL5 family. In terms of assembly, part of the 50S ribosomal subunit; part of the 5S rRNA/L5/L18/L25 subcomplex. Contacts the 5S rRNA and the P site tRNA. Forms a bridge to the 30S subunit in the 70S ribosome.

Its function is as follows. This is one of the proteins that bind and probably mediate the attachment of the 5S RNA into the large ribosomal subunit, where it forms part of the central protuberance. In the 70S ribosome it contacts protein S13 of the 30S subunit (bridge B1b), connecting the 2 subunits; this bridge is implicated in subunit movement. Contacts the P site tRNA; the 5S rRNA and some of its associated proteins might help stabilize positioning of ribosome-bound tRNAs. In Geotalea uraniireducens (strain Rf4) (Geobacter uraniireducens), this protein is Large ribosomal subunit protein uL5.